Here is a 194-residue protein sequence, read N- to C-terminus: Probable GTP-binding protein EngB (194 aa).

One can recognise an EngB-type G domain in the interval 23 to 194 (LNGEFVFVGR…YELIEIFGGV (172 aa)). GTP is bound by residues 31–38 (GRSNVGKS), 57–61 (GKTAS), 75–78 (DLPG), 143–146 (TKMD), and 173–175 (YSA). 2 residues coordinate Mg(2+): S38 and T59.

The protein belongs to the TRAFAC class TrmE-Era-EngA-EngB-Septin-like GTPase superfamily. EngB GTPase family. Mg(2+) serves as cofactor.

Necessary for normal cell division and for the maintenance of normal septation. In Thermosipho africanus (strain TCF52B), this protein is Probable GTP-binding protein EngB.